A 99-amino-acid polypeptide reads, in one-letter code: L-rhamnose mutarotase (99 aa).

Tyr-18 is a binding site for substrate. His-22 (proton donor) is an active-site residue. Substrate is bound by residues Tyr-41 and 76–77 (WW).

The protein belongs to the rhamnose mutarotase family. Homodimer.

It localises to the cytoplasm. It catalyses the reaction alpha-L-rhamnose = beta-L-rhamnose. The protein operates within carbohydrate metabolism; L-rhamnose metabolism. Involved in the anomeric conversion of L-rhamnose. The protein is L-rhamnose mutarotase of Shigella boydii serotype 18 (strain CDC 3083-94 / BS512).